Consider the following 355-residue polypeptide: MRPSLAELSVDDLASVLAQWGYKRSHAGRVLREYYARCGELTEAGRPWPAGLLERLRIEFAPGGTALAARQVAADGTTKLLLRLADGRTVEAVLMPDYRADRAAGCLSSQVGCAMGCDFCATAQSGFERNLTAGEMVEQFLALRREAASAGRKLQTVVFMGMGEPLLNLDAVLTAVRRIADNTYGGLGWRQVTVSTVGLVPGIDALTAADLGINLAVSLHAPDDATRAALLPAGRRFAIADILAAVDRFQASRGRPVIIQYCLLKGVNDSAAHARMLAAVIGSRRMHVNLLHYNPTGLSLRGVRYEPSGDEAAAQFLAELRARGVVTHLRRSRGPDIDAACGQLRAKRGELSVQS.

The Proton acceptor role is filled by Glu91. A Radical SAM core domain is found at 99–336 (RADRAAGCLS…THLRRSRGPD (238 aa)). A disulfide bridge connects residues Cys106 and Cys341. The [4Fe-4S] cluster site is built by Cys113, Cys117, and Cys120. S-adenosyl-L-methionine is bound by residues 163–164 (GE), Ser195, 218–220 (SLH), and Asn294. Catalysis depends on Cys341, which acts as the S-methylcysteine intermediate.

This sequence belongs to the radical SAM superfamily. RlmN family. Requires [4Fe-4S] cluster as cofactor.

It localises to the cytoplasm. The enzyme catalyses adenosine(2503) in 23S rRNA + 2 reduced [2Fe-2S]-[ferredoxin] + 2 S-adenosyl-L-methionine = 2-methyladenosine(2503) in 23S rRNA + 5'-deoxyadenosine + L-methionine + 2 oxidized [2Fe-2S]-[ferredoxin] + S-adenosyl-L-homocysteine. It carries out the reaction adenosine(37) in tRNA + 2 reduced [2Fe-2S]-[ferredoxin] + 2 S-adenosyl-L-methionine = 2-methyladenosine(37) in tRNA + 5'-deoxyadenosine + L-methionine + 2 oxidized [2Fe-2S]-[ferredoxin] + S-adenosyl-L-homocysteine. Specifically methylates position 2 of adenine 2503 in 23S rRNA and position 2 of adenine 37 in tRNAs. The sequence is that of Probable dual-specificity RNA methyltransferase RlmN 1 from Opitutus terrae (strain DSM 11246 / JCM 15787 / PB90-1).